The primary structure comprises 512 residues: GMP synthase [glutamine-hydrolyzing] (512 aa).

Residues Asn-3 to Thr-196 enclose the Glutamine amidotransferase type-1 domain. Residue Cys-80 is the Nucleophile of the active site. Catalysis depends on residues His-169 and Glu-171. Positions Trp-197 to Arg-387 constitute a GMPS ATP-PPase domain. Ser-225–Ser-231 contacts ATP.

As to quaternary structure, homodimer.

The catalysed reaction is XMP + L-glutamine + ATP + H2O = GMP + L-glutamate + AMP + diphosphate + 2 H(+). It functions in the pathway purine metabolism; GMP biosynthesis; GMP from XMP (L-Gln route): step 1/1. Catalyzes the synthesis of GMP from XMP. The polypeptide is GMP synthase [glutamine-hydrolyzing] (Chlamydia caviae (strain ATCC VR-813 / DSM 19441 / 03DC25 / GPIC) (Chlamydophila caviae)).